Reading from the N-terminus, the 183-residue chain is Ankyrin repeat domain-containing protein 39 (183 aa).

ANK repeat units lie at residues 30–59, 63–92, 96–125, and 129–158; these read DFER…DPSQ, AGYT…KCDA, GGAT…NPRV, and DGMT…ALKA. Ser-153 is modified (phosphoserine).

Belongs to the ANKRD39 family.

The polypeptide is Ankyrin repeat domain-containing protein 39 (ANKRD39) (Homo sapiens (Human)).